A 420-amino-acid polypeptide reads, in one-letter code: Pyridinium-3,5-bisthiocarboxylic acid mononucleotide nickel insertion protein (420 aa).

Belongs to the LarC family.

It catalyses the reaction Ni(II)-pyridinium-3,5-bisthiocarboxylate mononucleotide = pyridinium-3,5-bisthiocarboxylate mononucleotide + Ni(2+). Functionally, involved in the biosynthesis of a nickel-pincer cofactor ((SCS)Ni(II) pincer complex). Binds Ni(2+), and functions in nickel delivery to pyridinium-3,5-bisthiocarboxylic acid mononucleotide (P2TMN), to form the mature cofactor. Is required for the activation of the lactate racemase LarA. May also be involved in the activation of other nickel-pincer cofactor-dependent enzymes. The chain is Pyridinium-3,5-bisthiocarboxylic acid mononucleotide nickel insertion protein from Lactiplantibacillus plantarum (strain ATCC BAA-793 / NCIMB 8826 / WCFS1) (Lactobacillus plantarum).